A 281-amino-acid polypeptide reads, in one-letter code: NADPH-dependent 7-cyano-7-deazaguanine reductase (281 aa).

Residue 87-89 (IES) coordinates substrate. Residue 89–90 (SK) coordinates NADPH. Residue Cys-188 is the Thioimide intermediate of the active site. Catalysis depends on Asp-195, which acts as the Proton donor. Position 227-228 (227-228 (HE)) interacts with substrate. 256–257 (RG) provides a ligand contact to NADPH.

It belongs to the GTP cyclohydrolase I family. QueF type 2 subfamily. Homodimer.

The protein localises to the cytoplasm. It catalyses the reaction 7-aminomethyl-7-carbaguanine + 2 NADP(+) = 7-cyano-7-deazaguanine + 2 NADPH + 3 H(+). It functions in the pathway tRNA modification; tRNA-queuosine biosynthesis. Its function is as follows. Catalyzes the NADPH-dependent reduction of 7-cyano-7-deazaguanine (preQ0) to 7-aminomethyl-7-deazaguanine (preQ1). The polypeptide is NADPH-dependent 7-cyano-7-deazaguanine reductase (Photobacterium profundum (strain SS9)).